Consider the following 329-residue polypeptide: GTP 3',8-cyclase (329 aa).

Residues 8–234 form the Radical SAM core domain; that stretch reads AFARKFFYLR…QIRQRSDGPA (227 aa). R17 lines the GTP pocket. [4Fe-4S] cluster contacts are provided by C24 and C28. Residue Y30 coordinates S-adenosyl-L-methionine. C31 contacts [4Fe-4S] cluster. R68 contacts GTP. An S-adenosyl-L-methionine-binding site is contributed by G72. T99 is a binding site for GTP. S123 is a binding site for S-adenosyl-L-methionine. K160 provides a ligand contact to GTP. Residue M194 coordinates S-adenosyl-L-methionine. Positions 257 and 260 each coordinate [4Fe-4S] cluster. 262–264 serves as a coordination point for GTP; the sequence is RLR. C274 serves as a coordination point for [4Fe-4S] cluster.

Belongs to the radical SAM superfamily. MoaA family. Monomer and homodimer. Requires [4Fe-4S] cluster as cofactor.

The enzyme catalyses GTP + AH2 + S-adenosyl-L-methionine = (8S)-3',8-cyclo-7,8-dihydroguanosine 5'-triphosphate + 5'-deoxyadenosine + L-methionine + A + H(+). Its pathway is cofactor biosynthesis; molybdopterin biosynthesis. In terms of biological role, catalyzes the cyclization of GTP to (8S)-3',8-cyclo-7,8-dihydroguanosine 5'-triphosphate. The sequence is that of GTP 3',8-cyclase from Klebsiella pneumoniae (strain 342).